Reading from the N-terminus, the 335-residue chain is Phosphate acyltransferase (335 aa).

Belongs to the PlsX family. As to quaternary structure, homodimer. Probably interacts with PlsY.

Its subcellular location is the cytoplasm. It carries out the reaction a fatty acyl-[ACP] + phosphate = an acyl phosphate + holo-[ACP]. It functions in the pathway lipid metabolism; phospholipid metabolism. Functionally, catalyzes the reversible formation of acyl-phosphate (acyl-PO(4)) from acyl-[acyl-carrier-protein] (acyl-ACP). This enzyme utilizes acyl-ACP as fatty acyl donor, but not acyl-CoA. This is Phosphate acyltransferase from Streptococcus equi subsp. zooepidemicus (strain MGCS10565).